Here is a 21-residue protein sequence, read N- to C-terminus: Thanatin (21 aa).

Cys-11 and Cys-18 form a disulfide bridge.

It localises to the secreted. In terms of biological role, insect defense peptide with a broad spectrum of activity against Gram-positive and Gram-negative bacteria and fungi. No activity against S.aureus. Stops respiration in bacteria but does not permeabilize their inner membranes. The sequence is that of Thanatin from Podisus maculiventris (Spined soldier bug).